The following is a 205-amino-acid chain: Thymidylate kinase (205 aa).

13–20 (GIDGSGKS) contacts ATP.

This sequence belongs to the thymidylate kinase family.

The enzyme catalyses dTMP + ATP = dTDP + ADP. Functionally, phosphorylation of dTMP to form dTDP in both de novo and salvage pathways of dTTP synthesis. The chain is Thymidylate kinase from Leptospira borgpetersenii serovar Hardjo-bovis (strain L550).